We begin with the raw amino-acid sequence, 122 residues long: Large ribosomal subunit protein uL14 (122 aa).

It belongs to the universal ribosomal protein uL14 family. As to quaternary structure, part of the 50S ribosomal subunit. Forms a cluster with proteins L3 and L19. In the 70S ribosome, L14 and L19 interact and together make contacts with the 16S rRNA in bridges B5 and B8.

Functionally, binds to 23S rRNA. Forms part of two intersubunit bridges in the 70S ribosome. This chain is Large ribosomal subunit protein uL14, found in Bacillus mycoides (strain KBAB4) (Bacillus weihenstephanensis).